A 227-amino-acid chain; its full sequence is [D-Ala2]-deltorphins (227 aa).

An N-terminal signal peptide occupies residues M1 to S20. A propeptide spanning residues V21–M46 is cleaved from the precursor. Residues C22–M227 form a disordered region. Over residues E30–N39 the composition is skewed to acidic residues. D-alanine (Ala) is present on A50. A propeptide spanning residues D57–M75 is cleaved from the precursor. Residues N62 to G72 are compositionally biased toward acidic residues. Residues S73–P87 are compositionally biased toward basic and acidic residues. D-alanine (Ala) is present on A79. Positions E86 to M104 are excised as a propeptide. Residues E88 to H98 show a composition bias toward acidic residues. Over residues E99–A108 the composition is skewed to basic and acidic residues. A108 is modified (D-alanine (Ala)). At G113 the chain carries Glycine amide. Positions E115–M140 are excised as a propeptide. Residues E124 to H134 are compositionally biased toward acidic residues. Basic and acidic residues predominate over residues E135–A144. A144 is modified (D-alanine (Ala)). Position 149 is a glycine amide (G149). Residues E151–M176 constitute a propeptide that is removed on maturation. Residues E160–H170 show a composition bias toward acidic residues. Residues E171–A180 show a composition bias toward basic and acidic residues. A180 is subject to D-alanine (Ala). G185 bears the Glycine amide mark. Positions E187–M212 are excised as a propeptide. Positions E196–H206 are enriched in acidic residues. Residues E207–A216 show a composition bias toward basic and acidic residues. Residue A216 is modified to D-alanine (Ala). Residue G221 is modified to Glycine amide. A propeptide spanning residues E223–M227 is cleaved from the precursor.

The protein belongs to the frog skin active peptide (FSAP) family. Dermorphin subfamily. Expressed by the skin glands.

The protein resides in the secreted. Functionally, deltorphin is a heptapeptide with a very potent opiate-like activity. Has high affinity and selectivity for delta-type opioid receptors. The two dermorphin-like peptides have a similar affinity and selectivity for the mu opioid receptor as dermorphin. The chain is [D-Ala2]-deltorphins from Phyllomedusa bicolor (Two-colored leaf frog).